The chain runs to 158 residues: Cyclic pyranopterin monophosphate synthase (158 aa).

Substrate is bound by residues 76–78 (LCH) and 114–115 (ME). Aspartate 129 is an active-site residue.

Belongs to the MoaC family. As to quaternary structure, homohexamer; trimer of dimers.

It carries out the reaction (8S)-3',8-cyclo-7,8-dihydroguanosine 5'-triphosphate = cyclic pyranopterin phosphate + diphosphate. The protein operates within cofactor biosynthesis; molybdopterin biosynthesis. Functionally, catalyzes the conversion of (8S)-3',8-cyclo-7,8-dihydroguanosine 5'-triphosphate to cyclic pyranopterin monophosphate (cPMP). This Shewanella halifaxensis (strain HAW-EB4) protein is Cyclic pyranopterin monophosphate synthase.